Reading from the N-terminus, the 289-residue chain is 3-hydroxy-16-methoxy-2,3-dihydrotabersonine N-methyltransferase (289 aa).

Residues 71-80 (MLDVGSGLGG) are SAM motif I. The tract at residues 134-142 (GKFDVVFTI) is SAM motif II. The segment at 161-170 (VAAPGAAIII) is SAM motif III. Residues 287–289 (KSI) carry the Microbody targeting signal motif.

This sequence belongs to the class I-like SAM-binding methyltransferase superfamily. gTMT family. Homodimer. As to expression, mainly expressed in young leaves, and, to a lower extent, in mature leaves, flowers, stems and roots (at protein level).

The protein resides in the thylakoid. The protein localises to the peroxisome. The catalysed reaction is (3R)-3-hydroxy-16-methoxy-2,3-dihydrotabersonine + S-adenosyl-L-methionine = deacetoxyvindoline + S-adenosyl-L-homocysteine + H(+). It participates in alkaloid biosynthesis; vindoline biosynthesis. With respect to regulation, inhibited by gamma-tocopherol. In terms of biological role, S-adenosyl-L-methionine-dependent N-methyltransferase that catalyzes a nitrogen methylation involved in vindoline biosynthesis. Displays a strict requirement for a 2,3-dihydro bond in the aspidosperma skeleton. Can use 2,3-dihydrotabersonine, 2,3-dihydro-3-hydroxytabersonine and 2,3,6,7-tetraydro-3-hydroxytabersonine as substrates, but not tabersonine, vincadifformine, 21-hydroxycyclolochnericine, tryptamine, norharmane, harmaline, catharanthine, norajmaline, ajmaline, serpentine, ajmalicine, yohimbine or gamma-tocopherol. Inactive with picrinine as substrate. The sequence is that of 3-hydroxy-16-methoxy-2,3-dihydrotabersonine N-methyltransferase from Catharanthus roseus (Madagascar periwinkle).